The following is a 915-amino-acid chain: Protein MEI2-like 1 (915 aa).

Residues 1–90 (MPSDIMEQRG…NTTNGSQWES (90 aa)) form a disordered region. The span at 16–25 (HFHEDIHITS) shows a compositional bias: basic and acidic residues. The segment covering 50–65 (MPKSSWTSESYQLKPQ) has biased composition (polar residues). Residues 66 to 77 (SSFSGSHPSGSP) show a composition bias toward low complexity. The residue at position 76 (Ser76) is a Phosphoserine. A compositionally biased stretch (polar residues) spans 78 to 89 (NARNTTNGSQWE). RRM domains lie at 217-290 (RTLL…YSIS) and 302-375 (GALL…PTYP). Disordered regions lie at residues 690–723 (PGRS…SSSN) and 854–915 (LFHT…LKEN). A compositionally biased stretch (basic and acidic residues) spans 705-723 (PNERYRNLSHRRSESSSSN). The segment covering 882-898 (RSSSIDNYNSFSISSVS) has biased composition (polar residues).

Expressed in roots, shoots, leaves, flowers and siliques.

Functionally, probable RNA-binding transcriptional activator that plays a role in meiosis and vegetative growth. May be a downstream effector of TOR signaling pathway and recruited by RAPTOR1 for TOR substrate. In Arabidopsis thaliana (Mouse-ear cress), this protein is Protein MEI2-like 1 (ML1).